Reading from the N-terminus, the 376-residue chain is Putative glutamate--cysteine ligase 2-1 (376 aa).

The protein belongs to the glutamate--cysteine ligase type 2 family. YbdK subfamily.

It catalyses the reaction L-cysteine + L-glutamate + ATP = gamma-L-glutamyl-L-cysteine + ADP + phosphate + H(+). Its function is as follows. ATP-dependent carboxylate-amine ligase which exhibits weak glutamate--cysteine ligase activity. In Mycobacterium sp. (strain KMS), this protein is Putative glutamate--cysteine ligase 2-1.